The primary structure comprises 289 residues: Diaminopimelate epimerase (289 aa).

Residues N13, Q47, and N67 each contribute to the substrate site. Catalysis depends on C76, which acts as the Proton donor. Residues 77–78 (GN), N167, N200, and 218–219 (ER) contribute to the substrate site. C227 serves as the catalytic Proton acceptor. 228–229 (GT) contributes to the substrate binding site.

This sequence belongs to the diaminopimelate epimerase family. Homodimer.

The protein resides in the cytoplasm. The catalysed reaction is (2S,6S)-2,6-diaminopimelate = meso-2,6-diaminopimelate. The protein operates within amino-acid biosynthesis; L-lysine biosynthesis via DAP pathway; DL-2,6-diaminopimelate from LL-2,6-diaminopimelate: step 1/1. In terms of biological role, catalyzes the stereoinversion of LL-2,6-diaminopimelate (L,L-DAP) to meso-diaminopimelate (meso-DAP), a precursor of L-lysine and an essential component of the bacterial peptidoglycan. In Burkholderia ambifaria (strain ATCC BAA-244 / DSM 16087 / CCUG 44356 / LMG 19182 / AMMD) (Burkholderia cepacia (strain AMMD)), this protein is Diaminopimelate epimerase.